The following is a 302-amino-acid chain: Sulfate adenylyltransferase subunit 2 (302 aa).

It belongs to the PAPS reductase family. CysD subfamily. Heterodimer composed of CysD, the smaller subunit, and CysN.

It catalyses the reaction sulfate + ATP + H(+) = adenosine 5'-phosphosulfate + diphosphate. Its pathway is sulfur metabolism; hydrogen sulfide biosynthesis; sulfite from sulfate: step 1/3. In terms of biological role, with CysN forms the ATP sulfurylase (ATPS) that catalyzes the adenylation of sulfate producing adenosine 5'-phosphosulfate (APS) and diphosphate, the first enzymatic step in sulfur assimilation pathway. APS synthesis involves the formation of a high-energy phosphoric-sulfuric acid anhydride bond driven by GTP hydrolysis by CysN coupled to ATP hydrolysis by CysD. The sequence is that of Sulfate adenylyltransferase subunit 2 from Baumannia cicadellinicola subsp. Homalodisca coagulata.